The following is a 405-amino-acid chain: Solute carrier family 35 member E2A (405 aa).

The tract at residues M1–K22 is disordered. The next 10 membrane-spanning stretches (helical) occupy residues L76–I96, M106–P126, F142–V162, V167–S187, T195–A215, S219–F241, A264–G284, I296–A316, F326–G346, and N347–Y367. The tract at residues S380 to H405 is disordered.

It belongs to the TPT transporter family. SLC35E subfamily.

The protein localises to the membrane. Putative transporter. This Mus musculus (Mouse) protein is Solute carrier family 35 member E2A (Slc35e2a).